The primary structure comprises 280 residues: MARRYCFTLNYATEIERETFLSLFSQDELNYFVVGDETATTGQKHLQGFVSFKNKIRLGGLKKKFGNRAHWEIARGSDSQNRDYCCKETLISEIGIPVMKGSNKRKTMEIYEEDPEEMQLKDPDTALRCKAKKLKEEYCSCYDFQKLRPWQIELHAALMAEPDDRSIIWVYGSDGGEGKTSFAKELIRYGWFYTAGGKTQDVLYMYAQDPERNIAFDVPRCSSEMMNYQAMEMLKNRVFASTKYRPVDLCIRKLVHLIVFANVAPDPTRISEDRLVIINC.

The CRESS-DNA virus Rep endonuclease domain occupies 1–97; sequence MARRYCFTLN…ETLISEIGIP (97 aa). Positions 6–9 match the RCR-1 motif; that stretch reads CFTL. Glutamate 37 and histidine 45 together coordinate a divalent metal cation. Residues 45-47 carry the RCR-2 motif; it reads HLQ. A Nuclear localization signal motif is present at residues 54 to 75; it reads NKIRLGGLKKKFGNRAHWEIAR. Tyrosine 84 acts as the For DNA cleavage activity in catalysis. An RCR-3 motif is present at residues 84 to 87; sequence YCCK. Residues 97-103 carry the Nuclear localization signal motif; the sequence is PVMKGSN. An ATP-binding site is contributed by 172-180; the sequence is GSDGGEGKT.

The protein belongs to the nanoviridea/circoviridae replication-associated protein family. In terms of assembly, homooligomer (Potential). Rep binds to repeated DNA motifs (iterons). It depends on Mg(2+) as a cofactor. Mn(2+) serves as cofactor.

It is found in the host nucleus. It carries out the reaction ATP + H2O = ADP + phosphate + H(+). Its function is as follows. Initiates and terminates the replication only of its own subviral DNA molecule. The closed circular ssDNA genome is first converted to a superhelical dsDNA. Rep binds a specific hairpin at the genome origin of replication. Introduces an endonucleolytic nick within the intergenic region of the genome, thereby initiating the rolling circle replication (RCR). Following cleavage, binds covalently to the 5'-phosphate of DNA as a tyrosyl ester. The cleavage gives rise to a free 3'-OH that serves as a primer for the cellular DNA polymerase. The polymerase synthesizes the (+) strand DNA by rolling circle mechanism. After one round of replication, a Rep-catalyzed nucleotidyl transfer reaction releases a circular single-stranded virus genome, thereby terminating the replication. Displays origin-specific DNA cleavage, nucleotidyl transferase, ATPase and helicase activities. The polypeptide is Para-Rep C2 (C2) (Subterranean clover stunt C2 alphasatellite (SCSC2A)).